The chain runs to 212 residues: Pyridoxine/pyridoxamine 5'-phosphate oxidase (212 aa).

Substrate contacts are provided by residues 8-11 (RREY) and Lys-66. Residues 61-66 (RIVLLK), 76-77 (FT), Arg-82, Lys-83, and Gln-105 contribute to the FMN site. The substrate site is built by Tyr-123, Arg-127, and Ser-131. Residues 140 to 141 (QS) and Trp-185 each bind FMN. 191-193 (RLH) provides a ligand contact to substrate. Residue Arg-195 participates in FMN binding.

The protein belongs to the pyridoxamine 5'-phosphate oxidase family. As to quaternary structure, homodimer. It depends on FMN as a cofactor.

It carries out the reaction pyridoxamine 5'-phosphate + O2 + H2O = pyridoxal 5'-phosphate + H2O2 + NH4(+). It catalyses the reaction pyridoxine 5'-phosphate + O2 = pyridoxal 5'-phosphate + H2O2. It participates in cofactor metabolism; pyridoxal 5'-phosphate salvage; pyridoxal 5'-phosphate from pyridoxamine 5'-phosphate: step 1/1. Its pathway is cofactor metabolism; pyridoxal 5'-phosphate salvage; pyridoxal 5'-phosphate from pyridoxine 5'-phosphate: step 1/1. Its function is as follows. Catalyzes the oxidation of either pyridoxine 5'-phosphate (PNP) or pyridoxamine 5'-phosphate (PMP) into pyridoxal 5'-phosphate (PLP). This is Pyridoxine/pyridoxamine 5'-phosphate oxidase from Shewanella sp. (strain MR-4).